Here is a 320-residue protein sequence, read N- to C-terminus: Pseudouridine-5'-phosphate glycosidase (320 aa).

Glutamate 25 acts as the Proton donor in catalysis. Positions 85 and 105 each coordinate substrate. Aspartate 137 contacts Mn(2+). 139-141 contributes to the substrate binding site; it reads SAD. Lysine 158 acts as the Nucleophile in catalysis.

This sequence belongs to the pseudouridine-5'-phosphate glycosidase family. Homotrimer. Requires Mn(2+) as cofactor.

The catalysed reaction is D-ribose 5-phosphate + uracil = psi-UMP + H2O. In terms of biological role, catalyzes the reversible cleavage of pseudouridine 5'-phosphate (PsiMP) to ribose 5-phosphate and uracil. Functions biologically in the cleavage direction, as part of a pseudouridine degradation pathway. The sequence is that of Pseudouridine-5'-phosphate glycosidase from Rhodospirillum centenum (strain ATCC 51521 / SW).